The sequence spans 226 residues: PKHD-type hydroxylase MADE_1018490 (226 aa).

Residues 77–177 (RIFPPCFNRY…RIAAITWIQS (101 aa)) form the Fe2OG dioxygenase domain. Fe cation-binding residues include His-95, Asp-97, and His-158. A 2-oxoglutarate-binding site is contributed by Arg-168.

It depends on Fe(2+) as a cofactor. Requires L-ascorbate as cofactor.

This chain is PKHD-type hydroxylase MADE_1018490, found in Alteromonas mediterranea (strain DSM 17117 / CIP 110805 / LMG 28347 / Deep ecotype).